The sequence spans 193 residues: MADKYTPRLKGKYDAEIAAAMQAKFGYKNALEIPRIEKITLNMGVGEASQDKKKVTTAAAEMELIAGQKPVITKAKKSIAQFKLREGMPIGCKVTLRRERMYEFLDRLITIAMPRIRDFRGLNPKSFDGRGNYAMGLKEQIIFPEISYDQIEKVRGMDIIVTTTAKTDDEARELLRLFGFPFPQDAAEQQQAA.

It belongs to the universal ribosomal protein uL5 family. As to quaternary structure, part of the 50S ribosomal subunit; part of the 5S rRNA/L5/L18/L25 subcomplex. Contacts the 5S rRNA and the P site tRNA. Forms a bridge to the 30S subunit in the 70S ribosome.

Its function is as follows. This is one of the proteins that bind and probably mediate the attachment of the 5S RNA into the large ribosomal subunit, where it forms part of the central protuberance. In the 70S ribosome it contacts protein S13 of the 30S subunit (bridge B1b), connecting the 2 subunits; this bridge is implicated in subunit movement. Contacts the P site tRNA; the 5S rRNA and some of its associated proteins might help stabilize positioning of ribosome-bound tRNAs. This chain is Large ribosomal subunit protein uL5, found in Novosphingobium aromaticivorans (strain ATCC 700278 / DSM 12444 / CCUG 56034 / CIP 105152 / NBRC 16084 / F199).